A 399-amino-acid chain; its full sequence is Elongation factor Tu (399 aa).

Residues 10–209 (KPHVNIGTIG…EVDAYIPTPE (200 aa)) enclose the tr-type G domain. The tract at residues 19–26 (GHVDHGKT) is G1. Position 19-26 (19-26 (GHVDHGKT)) interacts with GTP. Residue T26 coordinates Mg(2+). Residues 60-64 (GITIA) form a G2 region. Residues 81–84 (DCPG) form a G3 region. GTP contacts are provided by residues 81 to 85 (DCPGH) and 136 to 139 (NKQD). The tract at residues 136–139 (NKQD) is G4. The segment at 174–176 (SAL) is G5.

Belongs to the TRAFAC class translation factor GTPase superfamily. Classic translation factor GTPase family. EF-Tu/EF-1A subfamily. Monomer.

Its subcellular location is the cytoplasm. It carries out the reaction GTP + H2O = GDP + phosphate + H(+). GTP hydrolase that promotes the GTP-dependent binding of aminoacyl-tRNA to the A-site of ribosomes during protein biosynthesis. The sequence is that of Elongation factor Tu from Helicobacter pylori (strain Shi470).